The primary structure comprises 351 residues: uncharacterized protein (351 aa).

Positions 1–27 (MKNKKRVLIASSLSCAILLLSAATTQA) are cleaved as a signal peptide. The disordered stretch occupies residues 29 to 71 (SAHKDSQDQNKKEHVDKSQQKDKRNVTNKDKNSTVPDDIGKNG). Residues 30-60 (AHKDSQDQNKKEHVDKSQQKDKRNVTNKDKN) show a composition bias toward basic and acidic residues.

This sequence belongs to the aerolysin family.

This is an uncharacterized protein from Staphylococcus aureus (strain Mu50 / ATCC 700699).